The sequence spans 543 residues: RuBisCO large subunit-binding protein subunit alpha, chloroplastic (543 aa).

The transit peptide at G1–A2 directs the protein to the chloroplast.

The protein belongs to the chaperonin (HSP60) family. As to quaternary structure, oligomer of probably six alpha and six beta subunits.

It localises to the plastid. Its subcellular location is the chloroplast. Functionally, this protein binds RuBisCO small and large subunits and is implicated in the assembly of the enzyme oligomer. This Triticum aestivum (Wheat) protein is RuBisCO large subunit-binding protein subunit alpha, chloroplastic.